We begin with the raw amino-acid sequence, 66 residues long: U10-theraphotoxin-Cg1a 2 (66 aa).

The N-terminal stretch at 1-21 (MKTSVLFVIFGLALLLCLSFA) is a signal peptide. Positions 22–29 (AELEDTGR) are excised as a propeptide. 3 disulfides stabilise this stretch: cysteine 31/cysteine 46, cysteine 38/cysteine 51, and cysteine 45/cysteine 58.

The protein belongs to the neurotoxin 10 (Hwtx-1) family. 29 (Jztx-13) subfamily. As to expression, expressed by the venom gland.

The protein resides in the secreted. In terms of biological role, probable ion channel inhibitor. The protein is U10-theraphotoxin-Cg1a 2 of Chilobrachys guangxiensis (Chinese earth tiger tarantula).